Consider the following 75-residue polypeptide: Small ribosomal subunit protein bS16c (75 aa).

Belongs to the bacterial ribosomal protein bS16 family.

It is found in the plastid. Its subcellular location is the chloroplast. This is Small ribosomal subunit protein bS16c from Cyanidioschyzon merolae (strain NIES-3377 / 10D) (Unicellular red alga).